We begin with the raw amino-acid sequence, 232 residues long: Uracil-DNA glycosylase (232 aa).

D66 acts as the Proton acceptor in catalysis.

It belongs to the uracil-DNA glycosylase (UDG) superfamily. UNG family.

It localises to the cytoplasm. The enzyme catalyses Hydrolyzes single-stranded DNA or mismatched double-stranded DNA and polynucleotides, releasing free uracil.. Its function is as follows. Excises uracil residues from the DNA which can arise as a result of misincorporation of dUMP residues by DNA polymerase or due to deamination of cytosine. The protein is Uracil-DNA glycosylase of Lactobacillus helveticus (strain DPC 4571).